A 351-amino-acid polypeptide reads, in one-letter code: L-threonine 3-dehydrogenase (351 aa).

C42 lines the Zn(2+) pocket. Catalysis depends on charge relay system residues T44 and H47. Residues H67, E68, C97, C100, C103, and C111 each contribute to the Zn(2+) site. NAD(+) contacts are provided by residues I179, D199, R204, 266-268, and 291-292; these read LGL and IT.

This sequence belongs to the zinc-containing alcohol dehydrogenase family. As to quaternary structure, homotetramer. Requires Zn(2+) as cofactor.

It is found in the cytoplasm. The enzyme catalyses L-threonine + NAD(+) = (2S)-2-amino-3-oxobutanoate + NADH + H(+). It participates in amino-acid degradation; L-threonine degradation via oxydo-reductase pathway; glycine from L-threonine: step 1/2. In terms of biological role, catalyzes the NAD(+)-dependent oxidation of L-threonine to 2-amino-3-ketobutyrate. The sequence is that of L-threonine 3-dehydrogenase from Symbiobacterium thermophilum (strain DSM 24528 / JCM 14929 / IAM 14863 / T).